The following is a 496-amino-acid chain: Chromosomal replication initiator protein DnaA (496 aa).

A domain I, interacts with DnaA modulators region spans residues 1–76 (MKMDSAVSEE…TELWQEENPQ (76 aa)). The tract at residues 76–150 (QILKVEVVVR…AAATGAVLGS (75 aa)) is domain II. The domain III, AAA+ region stretch occupies residues 151-373 (PLDPRYTFDT…GAFNQLLFRQ (223 aa)). ATP is bound by residues Gly197, Gly199, Lys200, and Thr201. Residues 374 to 496 (SFEPNISIDR…LKRLINDQAA (123 aa)) are domain IV, binds dsDNA.

It belongs to the DnaA family. Oligomerizes as a right-handed, spiral filament on DNA at oriC.

The protein resides in the cytoplasm. Its function is as follows. Plays an essential role in the initiation and regulation of chromosomal replication. ATP-DnaA binds to the origin of replication (oriC) to initiate formation of the DNA replication initiation complex once per cell cycle. Binds the DnaA box (a 9 base pair repeat at the origin) and separates the double-stranded (ds)DNA. Forms a right-handed helical filament on oriC DNA; dsDNA binds to the exterior of the filament while single-stranded (ss)DNA is stabiized in the filament's interior. The ATP-DnaA-oriC complex binds and stabilizes one strand of the AT-rich DNA unwinding element (DUE), permitting loading of DNA polymerase. After initiation quickly degrades to an ADP-DnaA complex that is not apt for DNA replication. Binds acidic phospholipids. This Brucella abortus biovar 1 (strain 9-941) protein is Chromosomal replication initiator protein DnaA.